A 174-amino-acid chain; its full sequence is RNA pyrophosphohydrolase (174 aa).

One can recognise a Nudix hydrolase domain in the interval 6–149; sequence GYRPNVGIIL…KRDVYLGALK (144 aa). A Nudix box motif is present at residues 38–59; sequence GGIKPGESPETAMYRELYEEVG.

Belongs to the Nudix hydrolase family. RppH subfamily. A divalent metal cation serves as cofactor.

Functionally, accelerates the degradation of transcripts by removing pyrophosphate from the 5'-end of triphosphorylated RNA, leading to a more labile monophosphorylated state that can stimulate subsequent ribonuclease cleavage. This is RNA pyrophosphohydrolase from Neisseria meningitidis serogroup B (strain ATCC BAA-335 / MC58).